The primary structure comprises 500 residues: Glycerol kinase (500 aa).

Residue Thr11 coordinates ADP. Thr11, Thr12, and Ser13 together coordinate ATP. A sn-glycerol 3-phosphate-binding site is contributed by Thr11. Arg15 is an ADP binding site. Sn-glycerol 3-phosphate-binding residues include Arg81, Glu82, Tyr133, and Asp242. Glycerol contacts are provided by Arg81, Glu82, Tyr133, Asp242, and Gln243. 2 residues coordinate ADP: Thr264 and Gly307. ATP-binding residues include Thr264, Gly307, Gln311, and Gly411. Gly411 provides a ligand contact to ADP.

This sequence belongs to the FGGY kinase family.

It catalyses the reaction glycerol + ATP = sn-glycerol 3-phosphate + ADP + H(+). It functions in the pathway polyol metabolism; glycerol degradation via glycerol kinase pathway; sn-glycerol 3-phosphate from glycerol: step 1/1. Inhibited by fructose 1,6-bisphosphate (FBP). Functionally, key enzyme in the regulation of glycerol uptake and metabolism. Catalyzes the phosphorylation of glycerol to yield sn-glycerol 3-phosphate. The polypeptide is Glycerol kinase (Rhodopseudomonas palustris (strain BisA53)).